We begin with the raw amino-acid sequence, 388 residues long: bZIP transcription factor 1-D (388 aa).

Disordered regions lie at residues 1 to 49, 103 to 249, 261 to 316, and 348 to 388; these read MGSS…PIPP, FAPY…GPTT, TASS…RKQA, and ELLS…KDTN. Composition is skewed to low complexity over residues 23–33 and 117–129; these read PPATSSTATPT and AAGT…TAGG. Positions 169 to 179 are enriched in polar residues; the sequence is SGASANGTISQ. Positions 180-193 are enriched in low complexity; that stretch reads SGESGSESSSEGSE. Residues 214-231 show a composition bias toward polar residues; it reads RSSQNGVSPSPSQAQLKQ. A bZIP domain is found at 293–356; sequence ELKRQKRKQS…DELLSKNSSL (64 aa). The segment at 295–314 is basic motif; that stretch reads KRQKRKQSNRDSARRSRLRK. Residues 302–316 show a composition bias toward basic and acidic residues; sequence SNRDSARRSRLRKQA. The leucine-zipper stretch occupies residues 321–356; that stretch reads LAQRAEVLKQENASLKDEVSRIRKEYDELLSKNSSL. Composition is skewed to basic and acidic residues over residues 359–369 and 375–388; these read NVGDKQHKTDE and KLQH…KDTN.

It belongs to the bZIP family. As to expression, highly expressed in roots and at lower levels in stems and leaves.

Its subcellular location is the nucleus. Probable transcription factor that may be involved in responses to fungal pathogen infection and abiotic stresses. The sequence is that of bZIP transcription factor 1-D from Triticum aestivum (Wheat).